An 84-amino-acid chain; its full sequence is Metallothionein type 2b (84 aa).

Belongs to the metallothionein superfamily. Type 15 family. As to expression, expressed in leaves, stems and roots.

Its subcellular location is the cytoplasm. The protein localises to the nucleus. In terms of biological role, metallothioneins have a high content of cysteine residues that bind various heavy metals. Probably involved in maintaining homeostasis of essential transition metals and detoxification of toxic metals. Increases cadmium and zinc tolerance when expressed in heterologous systems. Metal chelator binding 6 cadmium or 5 zinc atoms per protein. The chain is Metallothionein type 2b from Colocasia esculenta (Wild taro).